The primary structure comprises 742 residues: Synaptic vesicle glycoprotein 2A (742 aa).

The interaction with SYT1 stretch occupies residues 1 to 57; that stretch reads MEEGFRDRAAFIRGAKDIAKEVKKHAAKKVVKGLDRVQDEYSRRSYSRFEEEDDDDD. The Cytoplasmic segment spans residues 1–169; that stretch reads MEEGFRDRAA…GHGRFQWTLY (169 aa). Over residues 33–49 the composition is skewed to basic and acidic residues; the sequence is GLDRVQDEYSRRSYSRF. Residues 33–144 are disordered; that stretch reads GLDRVQDEYS…GRGEAQRRKE (112 aa). Phosphoserine occurs at positions 80 and 81. Residue Thr84 is modified to Phosphothreonine. Over residues 122–137 the composition is skewed to gly residues; that stretch reads VRGGLSDGEGPPGGRG. Ser127 is subject to Phosphoserine. A helical membrane pass occupies residues 170-190; that stretch reads FVLGLALMADGVEVFVVGFVL. Topologically, residues 191 to 205 are extracellular; sequence PSAEKDMCLSDSNKG. The chain crosses the membrane as a helical span at residues 206–226; sequence MLGLIVYLGMMVGAFLWGGLA. Residues 227–233 are Cytoplasmic-facing; it reads DRLGRRQ. A helical membrane pass occupies residues 234 to 254; sequence CLLISLSVNSVFAFFSSFVQG. Over 255 to 262 the chain is Extracellular; it reads YGTFLFCR. Residues 263–283 form a helical membrane-spanning segment; that stretch reads LLSGVGIGGSIPIVFSYFSEF. Topologically, residues 284–294 are cytoplasmic; that stretch reads LAQEKRGEHLS. Residues 295–315 traverse the membrane as a helical segment; that stretch reads WLCMFWMIGGVYAAAMAWAII. The Extracellular portion of the chain corresponds to 316-334; sequence PHYGWSFQMGSAYQFHSWR. A helical transmembrane segment spans residues 335–355; that stretch reads VFVLVCAFPSVFAIGALTTQP. At 356–447 the chain is on the cytoplasmic side; sequence ESPRFFLENG…CFGPEYRRIT (92 aa). Ser393 carries the post-translational modification Phosphoserine. Residues 448–468 form a helical membrane-spanning segment; it reads LMMMGVWFTMSFSYYGLTVWF. At 469 to 598 the chain is on the extracellular side; the sequence is PDMIRHLQAV…GTGEGAYMVY (130 aa). A Phosphotyrosine modification is found at Tyr480. Asn498, Asn548, and Asn573 each carry an N-linked (GlcNAc...) asparagine glycan. The helical transmembrane segment at 599–619 threads the bilayer; the sequence is FVSFLGTLAVLPGNIVSALLM. At 620-626 the chain is on the cytoplasmic side; it reads DKIGRLR. The helical transmembrane segment at 627–647 threads the bilayer; sequence MLAGSSVMSCVSCFFLSFGNS. Residues 648–651 lie on the Extracellular side of the membrane; the sequence is ESAM. Residues 652–672 traverse the membrane as a helical segment; it reads IALLCLFGGVSIASWNALDVL. At 673–685 the chain is on the cytoplasmic side; it reads TVELYPSDKRTTA. The chain crosses the membrane as a helical span at residues 686–708; the sequence is FGFLNALCKLAAVLGISIFTSFV. Residues 709-712 lie on the Extracellular side of the membrane; the sequence is GITK. The chain crosses the membrane as a helical span at residues 713–731; it reads AAPILFASAALALGSSLAL. Residues 732–742 lie on the Cytoplasmic side of the membrane; the sequence is KLPETRGQVLQ.

The protein belongs to the major facilitator superfamily. Interacts with SYT1/synaptotagmin-1 in a calcium-dependent manner. Binds the adapter protein complex AP-2. As to quaternary structure, (Microbial infection) Interacts with C.botulinum neurotoxin type A2 (BoNT/A, botA). Interaction is improved by glycosylation of SV2. Phosphorylation by CK1 of the N-terminal cytoplasmic domain regulates interaction with SYT1. In terms of processing, N-glycosylated.

The protein resides in the presynapse. It localises to the cytoplasmic vesicle. It is found in the secretory vesicle. The protein localises to the synaptic vesicle membrane. Its function is as follows. Plays a role in the control of regulated secretion in neural and endocrine cells, enhancing selectively low-frequency neurotransmission. Positively regulates vesicle fusion by maintaining the readily releasable pool of secretory vesicles. Functionally, (Microbial infection) Receptor for the C.botulinum neurotoxin type A2 (BoNT/A, botA); glycosylation is not essential but enhances the interaction. Probably also serves as a receptor for the closely related C.botulinum neurotoxin type A1. In Homo sapiens (Human), this protein is Synaptic vesicle glycoprotein 2A (SV2A).